The primary structure comprises 463 residues: Mitochondrial dynamics protein MIEF1 (463 aa).

Topologically, residues 1-23 (MAGAGERKGKKDDNGIGTAIDFV) are mitochondrial intermembrane. The helical transmembrane segment at 24-46 (LSNARLVLGVGGAAMLGIATLAV) threads the bilayer. The Cytoplasmic segment spans residues 47 to 463 (KRMYDRAISA…LSEPEVLLQT (417 aa)). The dimerization stretch occupies residues 49-195 (MYDRAISAPT…LSGSLYDDLQ (147 aa)). 4 positions are modified to phosphoserine: S55, S59, S79, and S94. Residues 57-77 (PTSPTRLSHSGKRSWEEPNWM) form a disordered region. The segment at 96-123 (QTLPTDSSTFDTDTFCPPRPKPVARKGQ) is disordered. Low complexity predominate over residues 100–110 (TDSSTFDTDTF). The important for interaction with DNM1L stretch occupies residues 160–169 (AAVDICAELR). ADP is bound by residues S187, S189, and H201. The important for interaction with DNM1L stretch occupies residues 234-242 (RRENPEYFP). ADP is bound by residues S340, R342, and K368.

This sequence belongs to the SMCR7 family. In terms of assembly, homodimer. Interacts with DNM1L. In terms of tissue distribution, expression is relatively high in heart, skeletal muscle, pancreas and kidney.

The protein resides in the mitochondrion outer membrane. In terms of biological role, mitochondrial outer membrane protein which regulates mitochondrial fission/fusion dynamics. Promotes the recruitment and association of the fission mediator dynamin-related protein 1 (DNM1L) to the mitochondrial surface independently of the mitochondrial fission FIS1 and MFF proteins. Regulates DNM1L GTPase activity and DNM1L oligomerization. Binds ADP and can also bind GDP, although with lower affinity. Does not bind CDP, UDP, ATP, AMP or GTP. Inhibits DNM1L GTPase activity in the absence of bound ADP. Requires ADP to stimulate DNM1L GTPase activity and the assembly of DNM1L into long, oligomeric tubules with a spiral pattern, as opposed to the ring-like DNM1L oligomers observed in the absence of bound ADP. Does not require ADP for its function in recruiting DNM1L. The sequence is that of Mitochondrial dynamics protein MIEF1 from Homo sapiens (Human).